The primary structure comprises 350 residues: Phosphotriesterase-related protein (350 aa).

Positions 22, 24, 169, 201, 230, and 298 each coordinate a divalent metal cation.

It belongs to the metallo-dependent hydrolases superfamily. Phosphotriesterase family. It depends on a divalent metal cation as a cofactor.

The polypeptide is Phosphotriesterase-related protein (Drosophila mojavensis (Fruit fly)).